The following is a 228-amino-acid chain: Histone H1-III (228 aa).

The span at Met1–Ala18 shows a compositional bias: low complexity. 2 disordered regions span residues Met1–Ser44 and Leu98–Ala228. The H15 domain maps to Thr39 to Ala113. A compositionally biased stretch (basic and acidic residues) spans Ala115–Pro133. Composition is skewed to basic residues over residues Ser148–Lys170 and Ala178–Ala209. A compositionally biased stretch (basic and acidic residues) spans Lys211 to Lys221.

Belongs to the histone H1/H5 family.

It is found in the nucleus. Its subcellular location is the chromosome. In terms of biological role, histones H1 are necessary for the condensation of nucleosome chains into higher-order structures. This chain is Histone H1-III, found in Glyptotendipes barbipes (Midge).